The following is a 634-amino-acid chain: Threonine--tRNA ligase (634 aa).

One can recognise a TGS domain in the interval 1–61; that stretch reads MINIRFPDGS…NSNCELRLIT (61 aa). Residues 241–532 form a catalytic region; the sequence is DHRKIGKVLD…LIEHYAGNLP (292 aa). The Zn(2+) site is built by Cys-332, His-383, and His-509.

Belongs to the class-II aminoacyl-tRNA synthetase family. In terms of assembly, homodimer. Zn(2+) serves as cofactor.

It is found in the cytoplasm. It catalyses the reaction tRNA(Thr) + L-threonine + ATP = L-threonyl-tRNA(Thr) + AMP + diphosphate + H(+). Functionally, catalyzes the attachment of threonine to tRNA(Thr) in a two-step reaction: L-threonine is first activated by ATP to form Thr-AMP and then transferred to the acceptor end of tRNA(Thr). Also edits incorrectly charged L-seryl-tRNA(Thr). This chain is Threonine--tRNA ligase, found in Francisella tularensis subsp. tularensis (strain FSC 198).